Here is a 541-residue protein sequence, read N- to C-terminus: MAKEIKFAEDARAAMLRGVDVLADTVKVTLGPKGRNVVLEKSFGSPLITNDGVTIAKEIELEDHFENMGAKLVSEVASKTNDIAGDGTTTATVLTQAIVREGLKNVTAGANPLGIRRGIELATKTAVEELHNISSVVDSKEAIAQVAAVSSGSEKVGQLIADAMEKVGNDGVITIEESKGIETELDVVEGMQFDRGYLSQYMVTDNDKMEAVLENPYILITDKKISNIQDILPLLEQILQQSRPLLIIADDVDGEALPTLVLNKIRGTFNVVAVKAPGFGDRRKAMLEDIAILTGGTVITDDLGLELKDTTIENLGNASKVVVDKDNTTIVEGAGSKEAIDARVHLIKNQIGETTSDFDREKLQERLAKLAGGVAVVKVGAATETELKELKLRIEDALNATRAAVEEGMVSGGGTALVNVIGKVAALEAEGDVATGIKIVVRALEEPIRQIAENAGYEGSVIVDKLKNVDLGIGFNAANGEWVNMVEAGIVDPTKVTRSALQNAASVSALLLTTEAVVADKPEPAAPAPMMDPSMGMGGMM.

ATP contacts are provided by residues T29 to P32, D86 to T90, G413, N476 to A478, and D492.

Belongs to the chaperonin (HSP60) family. Forms a cylinder of 14 subunits composed of two heptameric rings stacked back-to-back. Interacts with the co-chaperonin GroES.

It is found in the cytoplasm. The enzyme catalyses ATP + H2O + a folded polypeptide = ADP + phosphate + an unfolded polypeptide.. Functionally, together with its co-chaperonin GroES, plays an essential role in assisting protein folding. The GroEL-GroES system forms a nano-cage that allows encapsulation of the non-native substrate proteins and provides a physical environment optimized to promote and accelerate protein folding. The protein is Chaperonin GroEL of Enterococcus faecalis (strain ATCC 700802 / V583).